Consider the following 381-residue polypeptide: MLLSIGMLMLSATQIYTIVTVQLFAFLNLLPVEADILAYNFENGTQTFDDLPARFGYRLPAEGLKGFLINSKPENACEPIAPPPLRDNSSTAFIVLIRRLECNFDIKVLNAQRAGYKAAIVHNVDSDDLISMGSNDIEILKKIDIPSVFIGEASANSLKEEFTYEKGGHVVLIPEFSLPLEYYLIPFLIIVGICLILIVIFMITKFVQDRHRARRNRLRKDQLKKLPVHKFKKGDEYDVCAICLDEYEDGDKLRILPCSHAYHCKCVDPWLTKTKKTCPVCKQKVVPSQGDSDSETDSSQEENEVSENTPLLRPLASVSTQSFGALSESHSHQNMTESSEYEEDDNDNIDSSDAESGVNEESVVVQLQPNDERDYRVTNTV.

Residues 1–34 form the signal peptide; it reads MLLSIGMLMLSATQIYTIVTVQLFAFLNLLPVEA. The Lumenal segment spans residues 35-182; it reads DILAYNFENG…IPEFSLPLEY (148 aa). The PA domain occupies 64-160; sequence LKGFLINSKP…GEASANSLKE (97 aa). N-linked (GlcNAc...) asparagine glycosylation is present at N88. Residues 183–203 traverse the membrane as a helical segment; the sequence is YLIPFLIIVGICLILIVIFMI. The Cytoplasmic segment spans residues 204 to 381; that stretch reads TKFVQDRHRA…ERDYRVTNTV (178 aa). The segment at 240–282 adopts an RING-type; atypical zinc-finger fold; the sequence is CAICLDEYEDGDKLRILPCSHAYHCKCVDPWLTKTKKTCPVCK. Residues 285-381 are disordered; sequence VVPSQGDSDS…ERDYRVTNTV (97 aa). 2 stretches are compositionally biased toward acidic residues: residues 292–305 and 339–353; these read SDSETDSSQEENEV and SEYEEDDNDNIDSSD. Over residues 370–381 the composition is skewed to basic and acidic residues; that stretch reads NDERDYRVTNTV.

As to expression, widely expressed (at protein level). Lowest levels in the liver, moderate levels in the heart, intestine and spleen, and high levels in skeletal muscle, kidney, proventriculus and brain. Also expressed in inner ear after noise exposure.

The protein resides in the endoplasmic reticulum membrane. It localises to the late endosome membrane. Its subcellular location is the lysosome membrane. The protein localises to the nucleus inner membrane. It catalyses the reaction S-ubiquitinyl-[E2 ubiquitin-conjugating enzyme]-L-cysteine + [acceptor protein]-L-lysine = [E2 ubiquitin-conjugating enzyme]-L-cysteine + N(6)-ubiquitinyl-[acceptor protein]-L-lysine.. Its pathway is protein modification; protein ubiquitination. Functionally, E3 ubiquitin-protein ligase that regulates cell proliferation. Involved in apoptosis regulation. Mediates ER stress-induced activation of JNK signaling pathway and apoptosis by promoting ERN1 activation and splicing of XBP1 mRNA. This is E3 ubiquitin-protein ligase RNF13 from Gallus gallus (Chicken).